A 199-amino-acid chain; its full sequence is Transgelin-2 (199 aa).

A2 carries the post-translational modification N-acetylalanine. At S11 the chain carries Phosphoserine. K17 and K20 each carry N6-acetyllysine. Residues 24 to 136 (PDLEQILIQW…RTLMNLGGLA (113 aa)) form the Calponin-homology (CH) domain. Residue S163 is modified to Phosphoserine. K171 participates in a covalent cross-link: Glycyl lysine isopeptide (Lys-Gly) (interchain with G-Cter in SUMO2). The stretch at 174–199 (IGLQMGTNRGASQAGMTGYGMPRQIL) is one Calponin-like repeat. The residue at position 180 (T180) is a Phosphothreonine. Omega-N-methylarginine occurs at positions 182 and 196.

Belongs to the calponin family.

In Rattus norvegicus (Rat), this protein is Transgelin-2 (Tagln2).